A 70-amino-acid polypeptide reads, in one-letter code: ATP synthase subunit c (70 aa).

2 helical membrane passes run 4–24 and 45–65; these read IAAA…NGLI and IMFI…VIAF.

Belongs to the ATPase C chain family. F-type ATPases have 2 components, F(1) - the catalytic core - and F(0) - the membrane proton channel. F(1) has five subunits: alpha(3), beta(3), gamma(1), delta(1), epsilon(1). F(0) has three main subunits: a(1), b(2) and c(10-14). The alpha and beta chains form an alternating ring which encloses part of the gamma chain. F(1) is attached to F(0) by a central stalk formed by the gamma and epsilon chains, while a peripheral stalk is formed by the delta and b chains.

The protein localises to the cell membrane. Functionally, f(1)F(0) ATP synthase produces ATP from ADP in the presence of a proton or sodium gradient. F-type ATPases consist of two structural domains, F(1) containing the extramembraneous catalytic core and F(0) containing the membrane proton channel, linked together by a central stalk and a peripheral stalk. During catalysis, ATP synthesis in the catalytic domain of F(1) is coupled via a rotary mechanism of the central stalk subunits to proton translocation. Its function is as follows. Key component of the F(0) channel; it plays a direct role in translocation across the membrane. A homomeric c-ring of between 10-14 subunits forms the central stalk rotor element with the F(1) delta and epsilon subunits. This chain is ATP synthase subunit c, found in Staphylococcus aureus (strain Mu3 / ATCC 700698).